A 351-amino-acid polypeptide reads, in one-letter code: Protein RecA (351 aa).

68–75 (GPESSGKT) lines the ATP pocket.

The protein belongs to the RecA family.

The protein localises to the cytoplasm. Its function is as follows. Can catalyze the hydrolysis of ATP in the presence of single-stranded DNA, the ATP-dependent uptake of single-stranded DNA by duplex DNA, and the ATP-dependent hybridization of homologous single-stranded DNAs. It interacts with LexA causing its activation and leading to its autocatalytic cleavage. This Chloroflexus aurantiacus (strain ATCC 29364 / DSM 637 / Y-400-fl) protein is Protein RecA.